The chain runs to 756 residues: Xylosyl- and glucuronyltransferase LARGE1 (756 aa).

Topologically, residues 1-10 are cytoplasmic; sequence MLGICRGRRK. The helical; Signal-anchor for type II membrane protein transmembrane segment at 11–31 threads the bilayer; that stretch reads FLAASLSLLCIPAITWIYLFS. At 32–756 the chain is on the lumenal side; it reads GSFEDGKPVS…LKYLTAENNS (725 aa). 2 disordered regions span residues 43 to 69 and 81 to 109; these read SPLESQAHSPRYTASSQRERESLEVRM and RQLSLAQGRAPSHRRGNHSKTYSMEEGTG. Over residues 44 to 58 the composition is skewed to polar residues; that stretch reads PLESQAHSPRYTASS. Positions 53–95 form a coiled coil; the sequence is RYTASSQRERESLEVRMREVEEENRALRRQLSLAQGRAPSHRR. The span at 59-69 shows a compositional bias: basic and acidic residues; the sequence is QRERESLEVRM. Residues N97, N122, and N148 are each glycosylated (N-linked (GlcNAc...) asparagine). A xylosyltransferase activity region spans residues 138–413; it reads IHVAIVCAGY…FLEYDGNLLR (276 aa). Mn(2+) is bound by residues D242 and D244. Residue N272 is glycosylated (N-linked (GlcNAc...) asparagine). The tract at residues 414–756 is glucuronyltransferase activity; sequence RELFGCPSEA…LKYLTAENNS (343 aa). Residues D563 and D565 each contribute to the Mn(2+) site.

In the C-terminal section; belongs to the glycosyltransferase 49 family. It in the N-terminal section; belongs to the glycosyltransferase 8 family. In terms of assembly, interacts with DAG1 (via the N-terminal domain of alpha-DAG1); the interaction increases binding of DAG1 to laminin. Interacts with B4GAT1. Mn(2+) is required as a cofactor. As to expression, ubiquitous. Highest expression in heart, brain and skeletal muscle.

It localises to the golgi apparatus membrane. The catalysed reaction is 3-O-[beta-D-GlcA-(1-&gt;3)-beta-D-Xyl-(1-&gt;4)-Rib-ol-P-Rib-ol-P-3-beta-D-GalNAc-(1-&gt;3)-beta-D-GlcNAc-(1-&gt;4)-(O-6-P-alpha-D-Man)]-Thr-[protein] + UDP-alpha-D-xylose = 3-O-[alpha-D-Xyl-(1-&gt;3)-beta-D-GlcA-(1-&gt;4)-beta-D-Xyl-(1-&gt;4)-Rib-ol-P-Rib-ol-P-3-beta-D-GalNAc-(1-&gt;3)-beta-D-GlcNAc-(1-&gt;4)-(O-6-P-alpha-D-Man)]-Thr-[protein] + UDP + H(+). It catalyses the reaction 3-O-{(1-&gt;[3)-alpha-D-Xyl-(1-&gt;3)-beta-D-GlcA-(1-&gt;](n)-4)-beta-D-Xyl-(1-&gt;4)-Rib-ol-P-Rib-ol-P-3-beta-D-GalNAc-(1-&gt;3)-beta-D-GlcNAc-(1-&gt;4)-O-6-P-alpha-D-Man}-L-Thr-[protein] + UDP-alpha-D-glucuronate = 3-O-{beta-D-GlcA-(1-&gt;[3)-alpha-D-Xyl-(1-&gt;3)-beta-D-GlcA-(1-&gt;](n)-4)-beta-D-Xyl-(1-&gt;4)-Rib-ol-P-Rib-ol-P-3-beta-D-GalNAc-(1-&gt;3)-beta-D-GlcNAc-(1-&gt;4)-O-6-P-alpha-D-Man}-L-Thr-[protein] + UDP + H(+). The enzyme catalyses 3-O-{beta-D-GlcA-(1-&gt;[3)-alpha-D-Xyl-(1-&gt;3)-beta-D-GlcA-(1-&gt;](n)-4)-beta-D-Xyl-(1-&gt;4)-Rib-ol-P-Rib-ol-P-3-beta-D-GalNAc-(1-&gt;3)-beta-D-GlcNAc-(1-&gt;4)-O-6-P-alpha-D-Man}-L-Thr-[protein] + UDP-alpha-D-xylose = 3-O-{(1-&gt;[3)-alpha-D-Xyl-(1-&gt;3)-beta-D-GlcA-(1-&gt;](n+1)-4)-beta-D-Xyl-(1-&gt;4)-Rib-ol-P-Rib-ol-P-3-beta-D-GalNAc-(1-&gt;3)-beta-D-GlcNAc-(1-&gt;4)-O-6-P-alpha-D-Man}-L-Thr-[protein] + UDP + H(+). It functions in the pathway protein modification; protein glycosylation. Bifunctional glycosyltransferase with both alpha-1,3-xylosyltransferase and beta-1,3-glucuronyltransferase activities involved in the maturation of alpha-dystroglycan (DAG1) by glycosylation leading to DAG1 binding to laminin G-like domain-containing extracellular proteins with high affinity. Elongates the glucuronyl-beta-1,4-xylose-beta disaccharide primer structure initiated by B4GAT1 by adding repeating units [-3-Xylose-alpha-1,3-GlcA-beta-1-] to produce a heteropolysaccharide. Requires the phosphorylation of core M3 (O-mannosyl trisaccharide) by POMK to elongate the glucuronyl-beta-1,4-xylose-beta disaccharide primer. Plays a key role in skeletal muscle function and regeneration. This chain is Xylosyl- and glucuronyltransferase LARGE1, found in Homo sapiens (Human).